A 329-amino-acid polypeptide reads, in one-letter code: uncharacterized protein (329 aa).

Disordered stretches follow at residues 16–41 and 183–229; these read RCGY…SRIC and LENK…KFEP. The segment covering 213 to 229 has biased composition (basic and acidic residues); it reads SNDKANRGEKGEAKFEP.

As to expression, expressed in testis and epididymis. Expressed at lower levels in ovary.

In terms of biological role, dispensable for normal development and fertility. This is an uncharacterized protein from Mus musculus (Mouse).